We begin with the raw amino-acid sequence, 653 residues long: Protein fem-1 homolog A (653 aa).

ANK repeat units follow at residues 2–31 (DLHT…REEL), 40–70 (SGGT…SVEA), 82–111 (EGAP…SVNR), 115–145 (TNST…DLEV), 149–178 (HGHT…QVNR), 182–211 (KGNT…RMER), and 214–243 (YGMT…AGDE). The residue at position 108 (Ser-108) is a Phosphoserine. Residues 242–274 (DEQAQPGLARVQPQGARSSPEEPPSGESYESCC) form a disordered region. TPR repeat units lie at residues 282–316 (VEAL…RHQG) and 374–407 (SYYI…QQNN). ANK repeat units lie at residues 518–560 (NGFT…DPDS) and 564–593 (DNNT…HMDA).

It belongs to the fem-1 family. As to quaternary structure, component of a CRL2 E3 ubiquitin-protein ligase complex, also named ECS (Elongin BC-CUL2/5-SOCS-box protein) complex, composed of CUL2, Elongin BC (ELOB and ELOC), RBX1 and substrate-specific adapter FEM1A. Interacts with PTGER4. Interacts with NFKB1; the interaction is direct. In terms of processing, phosphorylated; highly phosphorylated in myoblasts and myotubes. Phosphorylation at Ser-108 promotes PGE2-EP4-mediated inhibition of inflammation. Dephosphorylated by protein phosphatase 2A (PP2A).

It is found in the mitochondrion. Its subcellular location is the cytoplasm. Its pathway is protein modification; protein ubiquitination. In terms of biological role, substrate-recognition component of a Cul2-RING (CRL2) E3 ubiquitin-protein ligase complex of the DesCEND (destruction via C-end degrons) pathway, which recognizes a C-degron located at the extreme C terminus of target proteins, leading to their ubiquitination and degradation. The C-degron recognized by the DesCEND pathway is usually a motif of less than ten residues and can be present in full-length proteins, truncated proteins or proteolytically cleaved forms. The CRL2(FEM1A) complex specifically recognizes proteins with an arginine at the C-terminus: recognizes and binds proteins ending with -Lys/Arg-Xaa-Arg and -Lys/Arg-Xaa-Xaa-Arg C-degrons, such as SIL1 or OR51B2, leading to their ubiquitination and degradation. Involved in PGE2-EP4-mediated inhibition of inflammation of macrophages via interaction with NFKB1 and PTGER4. Promotes inflammation in brain microglia through MAP2K4/MKK4-mediated signaling. This Bos taurus (Bovine) protein is Protein fem-1 homolog A.